Reading from the N-terminus, the 341-residue chain is Nicotinate-nucleotide--dimethylbenzimidazole phosphoribosyltransferase (341 aa).

Glutamate 306 (proton acceptor) is an active-site residue.

This sequence belongs to the CobT family.

It carries out the reaction 5,6-dimethylbenzimidazole + nicotinate beta-D-ribonucleotide = alpha-ribazole 5'-phosphate + nicotinate + H(+). It participates in nucleoside biosynthesis; alpha-ribazole biosynthesis; alpha-ribazole from 5,6-dimethylbenzimidazole: step 1/2. In terms of biological role, catalyzes the synthesis of alpha-ribazole-5'-phosphate from nicotinate mononucleotide (NAMN) and 5,6-dimethylbenzimidazole (DMB). This is Nicotinate-nucleotide--dimethylbenzimidazole phosphoribosyltransferase from Methylocella silvestris (strain DSM 15510 / CIP 108128 / LMG 27833 / NCIMB 13906 / BL2).